A 281-amino-acid polypeptide reads, in one-letter code: Large ribosomal subunit protein uL2 (281 aa).

The interval 223-255 (TVRGSVMNPNDHPHGGGEGRAPIGRKSPVTPWG) is disordered.

Belongs to the universal ribosomal protein uL2 family. In terms of assembly, part of the 50S ribosomal subunit. Forms a bridge to the 30S subunit in the 70S ribosome.

In terms of biological role, one of the primary rRNA binding proteins. Required for association of the 30S and 50S subunits to form the 70S ribosome, for tRNA binding and peptide bond formation. It has been suggested to have peptidyltransferase activity; this is somewhat controversial. Makes several contacts with the 16S rRNA in the 70S ribosome. The chain is Large ribosomal subunit protein uL2 from Mycoplasma capricolum subsp. capricolum (strain California kid / ATCC 27343 / NCTC 10154).